Consider the following 540-residue polypeptide: Chaperonin GroEL (540 aa).

ATP is bound by residues 30–33 (TLGP), Lys51, 87–91 (DGTTT), Gly415, 479–481 (NAA), and Asp495.

Belongs to the chaperonin (HSP60) family. In terms of assembly, forms a cylinder of 14 subunits composed of two heptameric rings stacked back-to-back. Interacts with the co-chaperonin GroES.

Its subcellular location is the cytoplasm. The catalysed reaction is ATP + H2O + a folded polypeptide = ADP + phosphate + an unfolded polypeptide.. Together with its co-chaperonin GroES, plays an essential role in assisting protein folding. The GroEL-GroES system forms a nano-cage that allows encapsulation of the non-native substrate proteins and provides a physical environment optimized to promote and accelerate protein folding. The protein is Chaperonin GroEL of Pectobacterium carotovorum subsp. carotovorum (Erwinia carotovora subsp. carotovora).